The following is a 24-amino-acid chain: Ascaphin-4 (24 aa).

As to expression, expressed by the skin glands.

Its subcellular location is the secreted. Functionally, antimicrobial peptide that shows higher potency against Gram-negative bacteria than against Gram-positive bacteria. Has a very week hemolytic activity. This Ascaphus truei (Coastal tailed frog) protein is Ascaphin-4.